The following is an 897-amino-acid chain: DNA polymerase I (897 aa).

One can recognise a 5'-3' exonuclease domain in the interval 1–317 (MEQPVIKEGT…ILDNTPALDN (317 aa)). A 3'-5' exonuclease domain is found at 318–494 (APKKSRMIVL…RLCEYFEKGG (177 aa)). The interval 498 to 896 (DLLTLARDIE…FIAKRWNELK (399 aa)) is polymerase.

It belongs to the DNA polymerase type-A family. Single-chain monomer with multiple functions.

The catalysed reaction is DNA(n) + a 2'-deoxyribonucleoside 5'-triphosphate = DNA(n+1) + diphosphate. Functionally, in addition to polymerase activity, this DNA polymerase exhibits 3'-5' and 5'-3' exonuclease activity. This is DNA polymerase I (polA) from Helicobacter pylori (strain J99 / ATCC 700824) (Campylobacter pylori J99).